The following is a 400-amino-acid chain: S-adenosylmethionine synthase (400 aa).

Glycine 136–aspartate 141 lines the ATP pocket.

It belongs to the AdoMet synthase 2 family. The cofactor is Mg(2+).

It carries out the reaction L-methionine + ATP + H2O = S-adenosyl-L-methionine + phosphate + diphosphate. It participates in amino-acid biosynthesis; S-adenosyl-L-methionine biosynthesis; S-adenosyl-L-methionine from L-methionine: step 1/1. Its function is as follows. Catalyzes the formation of S-adenosylmethionine from methionine and ATP. The sequence is that of S-adenosylmethionine synthase (mat) from Thermoplasma acidophilum (strain ATCC 25905 / DSM 1728 / JCM 9062 / NBRC 15155 / AMRC-C165).